A 514-amino-acid polypeptide reads, in one-letter code: Bifunctional purine biosynthesis protein PurH (514 aa).

In terms of domain architecture, MGS-like spans 1-146 (MPPLALLSTS…KNFAHVTVLC (146 aa)).

This sequence belongs to the PurH family.

The enzyme catalyses (6R)-10-formyltetrahydrofolate + 5-amino-1-(5-phospho-beta-D-ribosyl)imidazole-4-carboxamide = 5-formamido-1-(5-phospho-D-ribosyl)imidazole-4-carboxamide + (6S)-5,6,7,8-tetrahydrofolate. The catalysed reaction is IMP + H2O = 5-formamido-1-(5-phospho-D-ribosyl)imidazole-4-carboxamide. It participates in purine metabolism; IMP biosynthesis via de novo pathway; 5-formamido-1-(5-phospho-D-ribosyl)imidazole-4-carboxamide from 5-amino-1-(5-phospho-D-ribosyl)imidazole-4-carboxamide (10-formyl THF route): step 1/1. It functions in the pathway purine metabolism; IMP biosynthesis via de novo pathway; IMP from 5-formamido-1-(5-phospho-D-ribosyl)imidazole-4-carboxamide: step 1/1. In Cyanothece sp. (strain PCC 7425 / ATCC 29141), this protein is Bifunctional purine biosynthesis protein PurH.